A 297-amino-acid chain; its full sequence is UDP-N-acetylenolpyruvoylglucosamine reductase (297 aa).

Residues 22-195 (RAGGTARYYA…LAGRFRLQRG (174 aa)) enclose the FAD-binding PCMH-type domain. Residue arginine 169 is part of the active site. Serine 223 serves as the catalytic Proton donor. Residue glutamate 293 is part of the active site.

This sequence belongs to the MurB family. It depends on FAD as a cofactor.

Its subcellular location is the cytoplasm. It carries out the reaction UDP-N-acetyl-alpha-D-muramate + NADP(+) = UDP-N-acetyl-3-O-(1-carboxyvinyl)-alpha-D-glucosamine + NADPH + H(+). The protein operates within cell wall biogenesis; peptidoglycan biosynthesis. Functionally, cell wall formation. This chain is UDP-N-acetylenolpyruvoylglucosamine reductase, found in Chloroflexus aurantiacus (strain ATCC 29364 / DSM 637 / Y-400-fl).